Here is a 285-residue protein sequence, read N- to C-terminus: Ribosomal protein L11 methyltransferase (285 aa).

Residues threonine 131, glycine 154, aspartate 176, and asparagine 223 each coordinate S-adenosyl-L-methionine.

This sequence belongs to the methyltransferase superfamily. PrmA family.

The protein resides in the cytoplasm. The enzyme catalyses L-lysyl-[protein] + 3 S-adenosyl-L-methionine = N(6),N(6),N(6)-trimethyl-L-lysyl-[protein] + 3 S-adenosyl-L-homocysteine + 3 H(+). Methylates ribosomal protein L11. The polypeptide is Ribosomal protein L11 methyltransferase (Brucella suis (strain ATCC 23445 / NCTC 10510)).